The chain runs to 342 residues: MEWVRGETIGFGTFSTVSTATKSRNSGDFPALIAVKSTDAYGAASLSNEKSVLDSLGDCPEIIRCYGEDSTVENGEEMHNLLLEYASRGSLASYMKKLGGEGLPESTVRRHTGSVLRGLRHIHAKGFAHCDIKLANILLFNDGSVKIADFGLAMRVDGDLTALRKSVEIRGTPLYMAPECVNDNEYGSAADVWALGCAVVEMFSGKTAWSVKEGSHFMSLLIRIGVGDELPKIPEMLSEEGKDFLSKCFVKDPAKRWTAEMLLNHSFVTIDLEDDHRENFVVKVKDEDKVLMSPKCPFEFDDWDSFTLDSNPSFDSPVERLGSLVSGSIPDWSVGGSWLTVR.

The Protein kinase domain maps to 3 to 268 (WVRGETIGFG…AEMLLNHSFV (266 aa)). Position 9 to 17 (9 to 17 (IGFGTFSTV)) interacts with ATP. Serine 18 is subject to Phosphoserine. Threonine 19 carries the phosphothreonine modification. An ATP-binding site is contributed by lysine 36. A phosphotyrosine mark is found at tyrosine 41 and tyrosine 66. Serine 93 and serine 114 each carry phosphoserine. The Proton acceptor role is filled by aspartate 131. Residues 285–342 (KDEDKVLMSPKCPFEFDDWDSFTLDSNPSFDSPVERLGSLVSGSIPDWSVGGSWLTVR) are required for MKK3 binding.

This sequence belongs to the protein kinase superfamily. Ser/Thr protein kinase family. As to quaternary structure, interacts with MKK3 and MPK18 via its C-terminal domain. Binds to MKK5. In terms of processing, autophosphorylates; active in phosphorylated state. Dephosphorylated by ABI1. In terms of tissue distribution, expressed in roots, seedlings, leaves, flower buds, flowers and siliques.

Its subcellular location is the nucleus. The protein localises to the cytoplasm. It carries out the reaction L-seryl-[protein] + ATP = O-phospho-L-seryl-[protein] + ADP + H(+). The enzyme catalyses L-threonyl-[protein] + ATP = O-phospho-L-threonyl-[protein] + ADP + H(+). Its activity is regulated as follows. Activated through serine, threonine and tyrosine phosphorylation, especially upon abscisic acid (ABA) treatment. Restricted activity by ABI1-mediated dephosphorylation. Mitogen-activated protein kinase kinase (MAPKK) that phosphorylates both MKK3 and MPK18 and regulate two separate signaling pathways involved in root microtubule functions. MAPKK which regulates abscisic acid (ABA) responses in a MAPKKK20-MKK5-MPK6 cascade involved in root growth (e.g. root cell division and elongation) and stomatal response, probably via MKK5 activation by protein phosphorylation and subsequent activation of MAPK6 by MKK5. Involved in various abiotic stresses (e.g. osmotic stress, cold and hydrogen peroxide) responses by phosphorylating and thus regulating MPK6 activity, in an ABA-independent manner. This Arabidopsis thaliana (Mouse-ear cress) protein is Mitogen-activated protein kinase kinase kinase 20.